The sequence spans 103 residues: Large ribosomal subunit protein uL23 (103 aa).

It belongs to the universal ribosomal protein uL23 family. Part of the 50S ribosomal subunit. Contacts protein L29, and trigger factor when it is bound to the ribosome.

Its function is as follows. One of the early assembly proteins it binds 23S rRNA. One of the proteins that surrounds the polypeptide exit tunnel on the outside of the ribosome. Forms the main docking site for trigger factor binding to the ribosome. The polypeptide is Large ribosomal subunit protein uL23 (Pelodictyon phaeoclathratiforme (strain DSM 5477 / BU-1)).